The sequence spans 325 residues: DNA-directed RNA polymerase subunit alpha (325 aa).

Positions 1-231 (MQTSLLKPKI…DQLSVFAALE (231 aa)) are alpha N-terminal domain (alpha-NTD). The segment at 246 to 325 (IDPILLRPVD…ENWPPAGLDK (80 aa)) is alpha C-terminal domain (alpha-CTD).

The protein belongs to the RNA polymerase alpha chain family. As to quaternary structure, homodimer. The RNAP catalytic core consists of 2 alpha, 1 beta, 1 beta' and 1 omega subunit. When a sigma factor is associated with the core the holoenzyme is formed, which can initiate transcription.

The catalysed reaction is RNA(n) + a ribonucleoside 5'-triphosphate = RNA(n+1) + diphosphate. Functionally, DNA-dependent RNA polymerase catalyzes the transcription of DNA into RNA using the four ribonucleoside triphosphates as substrates. This is DNA-directed RNA polymerase subunit alpha from Burkholderia multivorans (strain ATCC 17616 / 249).